A 357-amino-acid chain; its full sequence is Peptide chain release factor 1 (357 aa).

Gln-236 bears the N5-methylglutamine mark.

The protein belongs to the prokaryotic/mitochondrial release factor family. Post-translationally, methylated by PrmC. Methylation increases the termination efficiency of RF1.

It localises to the cytoplasm. In terms of biological role, peptide chain release factor 1 directs the termination of translation in response to the peptide chain termination codons UAG and UAA. This is Peptide chain release factor 1 from Mycobacterium marinum (strain ATCC BAA-535 / M).